Here is a 278-residue protein sequence, read N- to C-terminus: MEAPVTPYIWQYQPETGTAAGARQNYGAVINWLSSDNNMYHRVQEVNRQRNKIDDFREQTVRADMAHSFNDWKPQQLSQPASTAYLPAPNPIAGPRTIPDVIFTAEGEQLAGASPSLLSGGASLPPSSYRLGDGREYRKFTRDAMPFPHNWLVKENGVWVPVEERDPLLSEEGRNALSSYPTLTYAQPPILRYRRLGQQLQGGGVVAPSSRVVSLLTEQPRMPRTEGMTPYQFSAEFPPVVYDHPFSRNLTLFPKEFSPLFDPKDQVLATSLATLQYR.

Residues 114 to 199 constitute a propeptide that is removed on maturation; the sequence is SPSLLSGGAS…ILRYRRLGQQ (86 aa).

The protein belongs to the adenoviridae hexon-linking protein family. In terms of assembly, interacts with the peripentonal hexons as well as the hexons in the facets. Part of a complex composed of the core-capsid bridging protein, the endosome lysis protein VI and the hexon-linking protein VIII; these interactions bridge the virus core to the capsid. Post-translationally, cleaved by the viral protease during virion maturation. May cause the middle segment to be shed from the capsid.

The protein localises to the virion. It is found in the host nucleus. In terms of biological role, structural component of the virion that acts as a cement protein on the capsid interior and which glue the peripentonal hexons and group-of-nine hexons together. In Pantherophis guttatus (Corn snake), this protein is Pre-hexon-linking protein VIII.